The following is a 594-amino-acid chain: MASSTPSSSATSSNAGPDPNTTNLRPTTYDTWCGVAHGCTRKLGLKICGFLQRTNSLEEKSRLVSAFKERQSSKNLLSCENSDRDGRFRRTETDFSNLFARDLLPAKNGEEQTVQFLLEVVDILLNYVRKTFDRSTKVLDFHHPHQLLEGMEGFNLELSDHPESLEQILVDCRDTLKYGVRTGHPRFFNQLSTGLDIIGLAGEWLTSTANTNMFTYEIAPVFVLMEQITLKKMREIVGWSNKDGDGIFSPGGAISNMYSIMAARYKYFPEVKTKGMAAVPKLVLFTSEHSHYSIKKAGAALGFGTDNVILIKCNERGKIIPADLEAKILEAKQKGYIPLYVNATAGTTVYGAFDPIQEIADICEKYNLWLHVDAAWGGGLLMSRKHRHKLSGIERADSVTWNPHKMMGVLLQCSAILVKEKGILQGCNQMCAGYLFQPDKQYDVSYDTGDKAIQCGRHVDIFKFWLMWKAKGTVGFENQINKCLELAEYLYAKIKNREEFEMVFDGEPEHTNVCFWYIPQSLRGVPDSPERREKLHRVAPKIKALMMESGTTMVGYQPQGDKANFFRMVISNPAATQSDIDFLIEEIERLGQDL.

Over residues 1 to 13 (MASSTPSSSATSS) the composition is skewed to low complexity. A disordered region spans residues 1–25 (MASSTPSSSATSSNAGPDPNTTNLR). Ser-78 carries the post-translational modification Phosphoserine. 190 to 192 (QLS) is a 4-aminobutanoate binding site. An N6-(pyridoxal phosphate)lysine modification is found at Lys-405. Arg-567 is a binding site for 4-aminobutanoate.

The protein belongs to the group II decarboxylase family. In terms of assembly, homodimer. Pyridoxal 5'-phosphate serves as cofactor.

It catalyses the reaction L-glutamate + H(+) = 4-aminobutanoate + CO2. Its function is as follows. Catalyzes the synthesis of the inhibitory neurotransmitter gamma-aminobutyric acid (GABA) with pyridoxal 5'-phosphate as cofactor. This Sus scrofa (Pig) protein is Glutamate decarboxylase 1 (GAD1).